The sequence spans 394 residues: S-adenosylmethionine synthase (394 aa).

Residue H16 coordinates ATP. D18 lines the Mg(2+) pocket. E44 is a K(+) binding site. Residues E57 and Q99 each contribute to the L-methionine site. The interval 99-109 (QSPDIAQGVDE) is flexible loop. Residues 173-175 (DAK), 240-241 (RF), D249, 255-256 (RK), A272, and K276 contribute to the ATP site. Residue D249 participates in L-methionine binding. L-methionine is bound at residue K280.

This sequence belongs to the AdoMet synthase family. Homotetramer; dimer of dimers. It depends on Mg(2+) as a cofactor. Requires K(+) as cofactor.

It is found in the cytoplasm. It carries out the reaction L-methionine + ATP + H2O = S-adenosyl-L-methionine + phosphate + diphosphate. The protein operates within amino-acid biosynthesis; S-adenosyl-L-methionine biosynthesis; S-adenosyl-L-methionine from L-methionine: step 1/1. Its function is as follows. Catalyzes the formation of S-adenosylmethionine (AdoMet) from methionine and ATP. The overall synthetic reaction is composed of two sequential steps, AdoMet formation and the subsequent tripolyphosphate hydrolysis which occurs prior to release of AdoMet from the enzyme. This chain is S-adenosylmethionine synthase, found in Lacticaseibacillus paracasei (strain ATCC 334 / BCRC 17002 / CCUG 31169 / CIP 107868 / KCTC 3260 / NRRL B-441) (Lactobacillus paracasei).